The following is a 385-amino-acid chain: Trans-enoyl reductase poxH (385 aa).

64-67 (QPYS) is an NADP(+) binding site. Substrate is bound at residue 156 to 163 (PDPAAPPI). Residues 199–202 (STSV), 223–226 (SGTD), Y241, and 289–290 (LG) each bind NADP(+). A substrate-binding site is contributed by 309-313 (HMAPL). 372 to 373 (KR) contacts NADP(+).

This sequence belongs to the zinc-containing alcohol dehydrogenase family. In terms of assembly, monomer.

The protein operates within secondary metabolite biosynthesis. Its function is as follows. Trans-enoyl reductase; part of the gene cluster that mediates the biosynthesis of oxaleimides, cytotoxic compounds containing an unusual disubstituted succinimide moiety. The first step of the pathway is provided by the HR-PKS poxF that serves in a new mode of collaborative biosynthesis with the PKS-NRPS poxE, by providing the olefin containing amino acid substrate via the synthesis of an ACP-bound dec-4-enoate. The cytochrome P450 monooxygenase poxM-catalyzed oxidation at the alpha-position creates the enzyme-bound 2-hydroxydec-4-enoyl-ACP thioester, which may be prone to spontaneous hydrolysis to yield 2-hydroxydec-4-enoic acid due to increased electrophilicity of the carbonyl. 2-hydroxydec-4-enoic acid can then be further oxidized by poxM to yield the alpha-ketoacid 2-oxodec-4-enoicacid, which is reductively aminated by the aminotransferase poxL to yield (S,E)-2-aminodec-4-enoic acid. The Hybrid PKS-NRPS synthetase poxE then performs condensation between the octaketide product of its PKS modules and the amino group of (S,E)-2-aminodec-4-enoic acid which is activated and incorporated by the adenylation domain. The resulting aminoacyl product can be cyclized by the Diels-Alderase PoxQ and reductively released by the reductive (R) domain of poxE to yield an aldehyde intermediate. The released aldehyde is then substrate for a Knoevenagel condensation by the hydrolyase poxO followed by an oxidation at the 5-position of the pyrrolidone ring. The presence of the olefin from the amino acid building block allows for migration of the substituted allyl group to occur. This allylic transposition reaction takes place in a conjugate addition, semipinacol-like fashion to yield a succinimide intermediate. Iterative two-electron oxidations of the C7 methyl of the succinimide intermediate to the carboxylic acid can be catalyzed by one of two remaining cytochrome P450 monooxygenasess poxC or poxD to yield oxaleimide A. Subsequent oxidation yields the maleimide scaffold oxaleimide I. Both oxaleimide A and oxaleimide I can undergo oxidative modifications in the decalin ring to yield the series of products oxaleimides B to H. This is Trans-enoyl reductase poxH from Penicillium oxalicum (strain 114-2 / CGMCC 5302) (Penicillium decumbens).